Reading from the N-terminus, the 61-residue chain is Short neurotoxin 2 (61 aa).

Cystine bridges form between Cys-3–Cys-23, Cys-17–Cys-40, Cys-42–Cys-53, and Cys-54–Cys-59.

It belongs to the three-finger toxin family. Short-chain subfamily. Type I alpha-neurotoxin sub-subfamily. As to expression, expressed by the venom gland.

The protein localises to the secreted. Binds to muscle nicotinic acetylcholine receptor (nAChR) and inhibit acetylcholine from binding to the receptor, thereby impairing neuromuscular transmission. This chain is Short neurotoxin 2, found in Naja haje haje (Egyptian cobra).